The primary structure comprises 340 residues: Guanine nucleotide-binding protein G(I)/G(S)/G(T) subunit beta-1 (340 aa).

An N-acetylserine modification is found at serine 2. Phosphoserine is present on serine 2. WD repeat units follow at residues 46-94 (RTRR…HAIP), 95-140 (LRSS…RELA), 141-181 (GHTG…TTFT), 182-223 (GHTG…QTFT), 224-267 (GHES…YSHD), 268-309 (NIIC…GVLA), and 310-340 (GHDNRVSCLGVTDDGMAVATGSWDSFLKIWN). Histidine 266 carries the post-translational modification Phosphohistidine.

It belongs to the WD repeat G protein beta family. G proteins are composed of 3 units, alpha, beta and gamma. The heterodimer formed by GNB1 and GNG2 interacts with ARHGEF5. The heterodimer formed by GNB1 and GNG2 interacts with GRK2. Forms a complex with GNAO1 and GNG3. Interacts with ARHGEF18 and RASD2. Forms complexes with TAS2R14 and G-proteins; these complexes play a role in the perception of bitterness. Component of the TAS2R14-GNAI1 complex, consisting of TAS2R14, GNAI1, GNB1 and GNG2. Component of the TAS2R14-GNAT3 complex, consisting of TAS2R14, GNAT3, GNB1 and GNG2. Component of the TAS2R14-GNAS2 complex, consisting of TAS2R14, GNAS2, GNB1 and GNG2. Post-translationally, phosphorylation at His-266 by NDKB contributes to G protein activation by increasing the high energetic phosphate transfer onto GDP.

Guanine nucleotide-binding proteins (G proteins) are involved as a modulator or transducer in various transmembrane signaling systems. The beta and gamma chains are required for the GTPase activity, for replacement of GDP by GTP, and for G protein-effector interaction. In Cricetulus griseus (Chinese hamster), this protein is Guanine nucleotide-binding protein G(I)/G(S)/G(T) subunit beta-1 (GNB1).